The sequence spans 383 residues: MESTNRLSAIQTLLVIQRWIGLLKWENEGEDGVLTWLKRIYPFVLHLPLTFTYIALMWYEAITSSDFEEAGQVLYMSITELALVTKLLNIWYRRHEAASLIHELQHDPAFNLRNSEEIKFWQQNQRNFKRIFYWYIWGSLFVAVMGYISVFFQEDYELPFGYYVPFEWRTRERYFYAWGYNVVAMTLCCLSNILLDTLGCYFMFHIASLFRLLGMRLEALKNAAEEKARPELRRIFQLHTKVRRLTRECEVLVSPYVLSQVVFSAFIICFSAYRLVHMGFKQRPGLFVTTVQFVAVMIVQIFLPCYYGNELTFHANALTNSVFGTNWLEYSVGTRKLLNCYMEFLKRPVKVRAGVFFEIGLPIFVKTINNAYSFFALLLKISK.

The Cytoplasmic segment spans residues 1-41 (MESTNRLSAIQTLLVIQRWIGLLKWENEGEDGVLTWLKRIY). A helical transmembrane segment spans residues 42 to 62 (PFVLHLPLTFTYIALMWYEAI). Residues 63–70 (TSSDFEEA) lie on the Extracellular side of the membrane. The chain crosses the membrane as a helical span at residues 71-91 (GQVLYMSITELALVTKLLNIW). The Cytoplasmic segment spans residues 92–130 (YRRHEAASLIHELQHDPAFNLRNSEEIKFWQQNQRNFKR). Residues 131–151 (IFYWYIWGSLFVAVMGYISVF) traverse the membrane as a helical segment. Over 152–174 (FQEDYELPFGYYVPFEWRTRERY) the chain is Extracellular. A helical membrane pass occupies residues 175–195 (FYAWGYNVVAMTLCCLSNILL). Over 196–250 (DTLGCYFMFHIASLFRLLGMRLEALKNAAEEKARPELRRIFQLHTKVRRLTRECE) the chain is Cytoplasmic. A helical membrane pass occupies residues 251-271 (VLVSPYVLSQVVFSAFIICFS). Residues 272-284 (AYRLVHMGFKQRP) lie on the Extracellular side of the membrane. A helical membrane pass occupies residues 285 to 305 (GLFVTTVQFVAVMIVQIFLPC). At 306–358 (YYGNELTFHANALTNSVFGTNWLEYSVGTRKLLNCYMEFLKRPVKVRAGVFFE) the chain is on the cytoplasmic side. The chain crosses the membrane as a helical span at residues 359–379 (IGLPIFVKTINNAYSFFALLL). The Extracellular portion of the chain corresponds to 380-383 (KISK).

This sequence belongs to the insect chemoreceptor superfamily. Heteromeric odorant receptor channel (TC 1.A.69) family. Or2a subfamily. As to quaternary structure, interacts with Orco. Complexes exist early in the endomembrane system in olfactory sensory neurons (OSNs), coupling these complexes to the conserved ciliary trafficking pathway.

The protein resides in the cell membrane. Odorant receptor which mediates acceptance or avoidance behavior, depending on its substrates. The odorant receptor repertoire encodes a large collection of odor stimuli that vary widely in identity, intensity, and duration. May form a complex with Orco to form odorant-sensing units, providing sensitive and prolonged odorant signaling and calcium permeability. The protein is Odorant receptor 94b (Or94b) of Drosophila melanogaster (Fruit fly).